We begin with the raw amino-acid sequence, 2028 residues long: Pecanex-like protein 3 (2028 aa).

2 consecutive transmembrane segments (helical) span residues 33-53 (CFHLYVWIFLLIFPFLLYMVL) and 54-74 (PPSLMVAGVYCLVVAVIFATI). N-linked (GlcNAc...) asparagine glycosylation occurs at Asn95. The interval 96–116 (STMGEQEEEAAQGESSLPRDP) is disordered. Ser127 carries the post-translational modification Phosphoserine. Position 129 is a phosphothreonine (Thr129). Disordered stretches follow at residues 193–239 (IGDL…PMSP) and 263–625 (LVRT…SHSR). A compositionally biased stretch (pro residues) spans 198-208 (QTPPGVVPDPS). Basic and acidic residues-rich tracts occupy residues 263–273 (LVRTSSRREQC) and 305–319 (TDRETLSSFKSEKTN). N-linked (GlcNAc...) asparagine glycosylation is present at Asn319. Thr370 carries the post-translational modification Phosphothreonine. A phosphoserine mark is found at Ser392 and Ser431. A compositionally biased stretch (polar residues) spans 427–437 (GSELSPASSLR). A compositionally biased stretch (low complexity) spans 444 to 459 (TDSSSSTSCYSPESSQ). A compositionally biased stretch (polar residues) spans 488 to 497 (TQRTPSTASA). 2 positions are modified to phosphoserine: Ser505 and Ser521. Transmembrane regions (helical) follow at residues 793 to 815 (NIFGVGLSSLVAFLGYLLLLKGF), 819 to 836 (IWVFQFCLVIASCQYSLL), 852 to 872 (WVIAYSRPVYFCICCLLIWLL), 880 to 900 (PFPPVSLYGLTLFSASFFFCA), 903 to 923 (VATVFTLCFPFVFLLGLLPQV), 946 to 968 (SPLTAVFSLTRSLLAAALLYGFC), and 980 to 1000 (HVPVLFSVFCGLLVAMSYHLS). Ser1025 is modified (phosphoserine). 4 consecutive transmembrane segments (helical) span residues 1053–1073 (LVMCVVIAVLTFAVSASTVFI), 1078–1098 (VLGFVLYALAGAVGFFTHYLL), 1244–1264 (FVLTYIAPWQITWGSAFHAFA), and 1280–1300 (LLSGLFSTPLNPLLGSAVFIM). Ser1697 carries the post-translational modification Phosphoserine. Asn1770 carries an N-linked (GlcNAc...) asparagine glycan. Positions 1845–2028 (GLTSLSNHPP…AAQPLLEHQY (184 aa)) are disordered. Over residues 1890-1921 (RPPPLLQWPPPRLPGPPPASPAPTEGPRPSRP) the composition is skewed to pro residues. A phosphoserine mark is found at Ser1909 and Ser1955. A compositionally biased stretch (low complexity) spans 1966 to 1977 (PLDLSLSPDVSS). A compositionally biased stretch (polar residues) spans 1978 to 1987 (EASPARTTQD).

It belongs to the pecanex family.

It is found in the membrane. This is Pecanex-like protein 3 from Mus musculus (Mouse).